The chain runs to 271 residues: GPN-loop GTPase 3 (271 aa).

13–18 (GAGKST) contributes to the GTP binding site. Residues 70–72 (GPN) carry the Gly-Pro-Asn (GPN)-loop; involved in dimer interface motif. Position 173 to 176 (173 to 176 (SKVD)) interacts with GTP.

The protein belongs to the GPN-loop GTPase family. Heterodimers with GPN1 or GPN2. Binds to RNA polymerase II (RNAPII).

Functionally, small GTPase required for proper nuclear import of RNA polymerase II and III (RNAPII and RNAPIII). May act at an RNAP assembly step prior to nuclear import. This Eremothecium gossypii (strain ATCC 10895 / CBS 109.51 / FGSC 9923 / NRRL Y-1056) (Yeast) protein is GPN-loop GTPase 3.